Reading from the N-terminus, the 225-residue chain is MSIKQWPEGERPREKLLERGAAALSDAELLAILLRVGTRGMSAVDLARYLLQEFGSLGRLMSAEVGKLSAYKGMGTASFTQFAVVREIGRRILAEELQESIVLSDPDTVADYLRFHLGQEKVEVSVALLLNRQNQLIAVRELSRGTVAENTIYIREIVKLALDEYADSLIIAHNHPGGSPEPSQEDIMFTRRLAQAMSLVDVSLLDHFIVTSQSVCSFRQLGLMP.

Residues 102–224 (VLSDPDTVAD…VCSFRQLGLM (123 aa)) enclose the MPN domain. Zn(2+)-binding residues include His-173, His-175, and Asp-186. The JAMM motif motif lies at 173-186 (HNHPGGSPEPSQED).

It belongs to the UPF0758 family.

The protein is UPF0758 protein NMB1038 of Neisseria meningitidis serogroup B (strain ATCC BAA-335 / MC58).